The chain runs to 276 residues: RNA-binding protein pno-1 (276 aa).

Disordered stretches follow at residues 1–30 and 62–101; these read MATSSSAFDDEFPMEEGMPELLDDEDVPST and DVVMEDISQPDDSTTDSPDADAEQKPTKRSKGSKGESRVV. Residues 8–27 are compositionally biased toward acidic residues; the sequence is FDDEFPMEEGMPELLDDEDV. The KH domain maps to 197–249; it reads GDHVSRAIGRIAGKDGRTKLVIENTTKTRIVVANTKIHILGAYQNLKLARNAV.

Belongs to the PNO1 family. Part of the small subunit (SSU) processome, composed of more than 70 proteins and the RNA chaperone small nucleolar RNA (snoRNA) U3.

It localises to the nucleus. The protein localises to the nucleolus. Functionally, part of the small subunit (SSU) processome, first precursor of the small eukaryotic ribosomal subunit. During the assembly of the SSU processome in the nucleolus, many ribosome biogenesis factors, an RNA chaperone and ribosomal proteins associate with the nascent pre-rRNA and work in concert to generate RNA folding, modifications, rearrangements and cleavage as well as targeted degradation of pre-ribosomal RNA by the RNA exosome. Positively regulates dimethylation of two adjacent adenosines in the loop of a conserved hairpin near the 3'-end of 18S rRNA. This chain is RNA-binding protein pno-1, found in Caenorhabditis briggsae.